A 151-amino-acid polypeptide reads, in one-letter code: Glutamate mutase sigma subunit 1 (151 aa).

A B12-binding domain is found at 7–140 (PRTVILGVIG…EMLREDLQLT (134 aa)). Adenosylcob(III)alamin-binding positions include 17 to 21 (SDAHV), His-20, 65 to 67 (SSL), and 96 to 100 (NLAVG).

It belongs to the methylaspartate mutase GlmS subunit family. As to quaternary structure, heterotetramer composed of 2 epsilon subunits (GlmE) and 2 sigma subunits (GlmS). GlmE exists as a homodimer and GlmS as a monomer. Adenosylcob(III)alamin serves as cofactor.

It carries out the reaction (2S,3S)-3-methyl-L-aspartate = L-glutamate. Its pathway is amino-acid degradation; L-glutamate degradation via mesaconate pathway; acetate and pyruvate from L-glutamate: step 1/4. Catalyzes the carbon skeleton rearrangement of L-glutamate to L-threo-3-methylaspartate ((2S,3S)-3-methylaspartate). This Haloarcula marismortui (strain ATCC 43049 / DSM 3752 / JCM 8966 / VKM B-1809) (Halobacterium marismortui) protein is Glutamate mutase sigma subunit 1.